Reading from the N-terminus, the 140-residue chain is UPF0336 protein TW736 (140 aa).

Belongs to the UPF0336 family.

In Tropheryma whipplei (strain TW08/27) (Whipple's bacillus), this protein is UPF0336 protein TW736.